The following is a 469-amino-acid chain: Lactonohydrolase oryH (469 aa).

The N-terminal stretch at 1 to 20 is a signal peptide; the sequence is MYLSLRLVSLALCIAPLASA.

The protein belongs to the SMP-30/CGR1 family.

It participates in secondary metabolite biosynthesis. Lactonohydrolase; part of the gene cluster that mediates the biosynthesis of oryzines, natural products with an unusual maleidride backbone. The two subunits of the fungal fatty acid synthase oryfasA and oryfasB probably form octenoic acid. This fatty acid is most likely activated by the acyl-CoA ligase oryP to give octenyl-CoA before the citrate synthase-like protein oryE catalyzes condensation with oxaloacetate to form tricarboxylic acid. The next steps of the pathways are conjectural, but a favorite possible route has been proposed, beginning with decarboxylation and concomitant dehydration by the decarboxylase oryM, followed by tautomerization, which may lead to the production of a diene intermediate. Reduction of this diene intermediate could give the known metabolite piliformic acid. On the pathway to oryzine B and oryzine A, however, hydroxylation of the diene by the alpha-ketoglutarate-dependent dioxygenase oryG and lactonisation by the lactonohydrolases oryH or oryL could give oryzine B directly. Finally, enoyl reduction by the dehydrogenase oryD would then convert oryzine B into oryzine A. The protein is Lactonohydrolase oryH of Aspergillus oryzae (strain ATCC 42149 / RIB 40) (Yellow koji mold).